The primary structure comprises 345 residues: Protein RecA (345 aa).

65-72 (GPESSGKT) contacts ATP.

Belongs to the RecA family.

It localises to the cytoplasm. In terms of biological role, can catalyze the hydrolysis of ATP in the presence of single-stranded DNA, the ATP-dependent uptake of single-stranded DNA by duplex DNA, and the ATP-dependent hybridization of homologous single-stranded DNAs. It interacts with LexA causing its activation and leading to its autocatalytic cleavage. The sequence is that of Protein RecA from Colwellia psychrerythraea (strain 34H / ATCC BAA-681) (Vibrio psychroerythus).